The primary structure comprises 202 residues: Urease accessory protein UreE (202 aa).

Positions 138–202 (RGAYHSHGGH…HGHHHGHKHD (65 aa)) are disordered. A compositionally biased stretch (basic and acidic residues) spans 147–193 (HSHDHGHAAHDHGHAAHDHGHNHDHDHGHAHGHDHQHDHNCDHDHDH).

It belongs to the UreE family.

The protein resides in the cytoplasm. Functionally, involved in urease metallocenter assembly. Binds nickel. Probably functions as a nickel donor during metallocenter assembly. In Rhizobium etli (strain CIAT 652), this protein is Urease accessory protein UreE.